We begin with the raw amino-acid sequence, 230 residues long: DNA repair protein RecO (230 aa).

This sequence belongs to the RecO family.

Functionally, involved in DNA repair and RecF pathway recombination. The polypeptide is DNA repair protein RecO (Pseudoalteromonas translucida (strain TAC 125)).